The following is a 536-amino-acid chain: Berberine bridge enzyme-like 2 (536 aa).

The signal sequence occupies residues 1–20 (MKIFCLILFLISSFISTSLA). Residues Cys-35 and Cys-98 are joined by a disulfide bond. Asn-38, Asn-73, Asn-136, Asn-266, Asn-334, and Asn-352 each carry an N-linked (GlcNAc...) asparagine glycan. An FAD-binding PCMH-type domain is found at 76 to 250 (ATPKPAIVIA…LAFKIKLVPV (175 aa)). The segment at residues 113–175 (HDYEGVSYIS…KSHGFPAGVC (63 aa)) is a cross-link (6-(S-cysteinyl)-8alpha-(pros-histidyl)-FAD (His-Cys)).

The protein belongs to the oxygen-dependent FAD-linked oxidoreductase family. FAD serves as cofactor. The FAD cofactor is bound via a bicovalent 6-S-cysteinyl, 8alpha-N1-histidyl FAD linkage.

It is found in the secreted. The protein localises to the cell wall. The polypeptide is Berberine bridge enzyme-like 2 (Arabidopsis thaliana (Mouse-ear cress)).